A 467-amino-acid polypeptide reads, in one-letter code: NADH-ubiquinone oxidoreductase chain 4 (467 aa).

13 consecutive transmembrane segments (helical) span residues 21 to 40 (SMSK…PTLY), 54 to 74 (MADV…ISNW), 79 to 99 (STLY…NFMC), 105 to 125 (FYMY…LYGA), 135 to 155 (VLMY…LYEV), 168 to 188 (LVLS…GIAV), 207 to 227 (PLAG…FAMI), 239 to 259 (VTYT…TSII), 266 to 286 (LKVI…LGML), 297 to 317 (LVLC…VGGM), 330 to 350 (FQGL…LSFC), 367 to 387 (LTGA…SVLL), and 420 to 440 (VLMI…SWVM).

Belongs to the complex I subunit 4 family.

The protein resides in the mitochondrion membrane. It carries out the reaction a ubiquinone + NADH + 5 H(+)(in) = a ubiquinol + NAD(+) + 4 H(+)(out). Functionally, core subunit of the mitochondrial membrane respiratory chain NADH dehydrogenase (Complex I) that is believed to belong to the minimal assembly required for catalysis. Complex I functions in the transfer of electrons from NADH to the respiratory chain. The immediate electron acceptor for the enzyme is believed to be ubiquinone. The sequence is that of NADH-ubiquinone oxidoreductase chain 4 (ND4) from Debaryomyces hansenii (strain ATCC 36239 / CBS 767 / BCRC 21394 / JCM 1990 / NBRC 0083 / IGC 2968) (Yeast).